The primary structure comprises 337 residues: Large ribosomal subunit protein uL10 (337 aa).

A disordered region spans residues 309 to 337 (EEVVEEQEEVKEEEEEESDMASGLGALFG). A compositionally biased stretch (acidic residues) spans 310–327 (EVVEEQEEVKEEEEEESD).

The protein belongs to the universal ribosomal protein uL10 family. As to quaternary structure, part of the 50S ribosomal subunit. Forms part of the ribosomal stalk which helps the ribosome interact with GTP-bound translation factors. Forms a heptameric L10(L12)2(L12)2(L12)2 complex, where L10 forms an elongated spine to which the L12 dimers bind in a sequential fashion.

In terms of biological role, forms part of the ribosomal stalk, playing a central role in the interaction of the ribosome with GTP-bound translation factors. In Methanococcoides burtonii (strain DSM 6242 / NBRC 107633 / OCM 468 / ACE-M), this protein is Large ribosomal subunit protein uL10.